The chain runs to 122 residues: Large ribosomal subunit protein uL14 (122 aa).

It belongs to the universal ribosomal protein uL14 family. As to quaternary structure, part of the 50S ribosomal subunit. Forms a cluster with proteins L3 and L19. In the 70S ribosome, L14 and L19 interact and together make contacts with the 16S rRNA in bridges B5 and B8.

Binds to 23S rRNA. Forms part of two intersubunit bridges in the 70S ribosome. In Synechococcus sp. (strain JA-3-3Ab) (Cyanobacteria bacterium Yellowstone A-Prime), this protein is Large ribosomal subunit protein uL14.